The sequence spans 411 residues: Arginine deiminase (411 aa).

Cysteine 399 functions as the Amidino-cysteine intermediate in the catalytic mechanism.

Belongs to the arginine deiminase family.

It localises to the cytoplasm. It carries out the reaction L-arginine + H2O = L-citrulline + NH4(+). It functions in the pathway amino-acid degradation; L-arginine degradation via ADI pathway; carbamoyl phosphate from L-arginine: step 1/2. The polypeptide is Arginine deiminase (Latilactobacillus sakei subsp. sakei (strain 23K) (Lactobacillus sakei subsp. sakei)).